Consider the following 1097-residue polypeptide: DNA-directed RNA polymerase subunit beta (1097 aa).

The disordered stretch occupies residues 1072-1097 (QDVNPRRSTPSRPTYESLGVADYDED).

This sequence belongs to the RNA polymerase beta chain family. As to quaternary structure, in cyanobacteria the RNAP catalytic core is composed of 2 alpha, 1 beta, 1 beta', 1 gamma and 1 omega subunit. When a sigma factor is associated with the core the holoenzyme is formed, which can initiate transcription.

It carries out the reaction RNA(n) + a ribonucleoside 5'-triphosphate = RNA(n+1) + diphosphate. Functionally, DNA-dependent RNA polymerase catalyzes the transcription of DNA into RNA using the four ribonucleoside triphosphates as substrates. This is DNA-directed RNA polymerase subunit beta from Synechococcus sp. (strain CC9902).